A 1222-amino-acid chain; its full sequence is ATP-dependent helicase/nuclease subunit A (1222 aa).

The region spanning 39–495 is the UvrD-like helicase ATP-binding domain; that stretch reads QKRTAQQIEA…ILLKENFRSQ (457 aa). 60-67 provides a ligand contact to ATP; sequence ASAGSGKT. One can recognise a UvrD-like helicase C-terminal domain in the interval 524-810; that stretch reads QLIAGSHAQT…NLMTIHKSKG (287 aa).

Belongs to the helicase family. AddA subfamily. In terms of assembly, heterodimer of AddA and AddB/RexB. It depends on Mg(2+) as a cofactor.

It catalyses the reaction Couples ATP hydrolysis with the unwinding of duplex DNA by translocating in the 3'-5' direction.. The enzyme catalyses ATP + H2O = ADP + phosphate + H(+). In terms of biological role, the heterodimer acts as both an ATP-dependent DNA helicase and an ATP-dependent, dual-direction single-stranded exonuclease. Recognizes the chi site generating a DNA molecule suitable for the initiation of homologous recombination. The AddA nuclease domain is required for chi fragment generation; this subunit has the helicase and 3' -&gt; 5' nuclease activities. This chain is ATP-dependent helicase/nuclease subunit A, found in Streptococcus pyogenes serotype M3 (strain ATCC BAA-595 / MGAS315).